The following is a 77-amino-acid chain: Small integral membrane protein 5 (77 aa).

The helical transmembrane segment at 32–52 (IVAFSVIILFTATVLLLLLIA) threads the bilayer.

The protein resides in the membrane. This is Small integral membrane protein 5 (SMIM5) from Homo sapiens (Human).